A 293-amino-acid chain; its full sequence is MIETTDSLRDCLAPAKLNLFLHITGRRPDGYHTLQTVFQLLDWGDTLHFTRRDDGLITRSTEIADVPPEHDLTVRAATLLKAHTGSPEGVDIEIDKRLPMGAGLGGGSSDAATTLLALNRLWKLNLPRLELQALALKLGADVPFFVFGKNAFAQGVGEALDVVQLPPRHFLVVTPRVHVPTAAIFSEKALTRDSKPLTITDFPAELSCNTEWPESFGRNDMQQVVVGKYAEVAQVLRWFENVAPARMSGSGASVFAAFRSKAEAEAAQAKLPAEWNSAVTASLDQHPLFTFAS.

Lysine 16 is a catalytic residue. 99–109 (PMGAGLGGGSS) contributes to the ATP binding site. Aspartate 141 is an active-site residue.

This sequence belongs to the GHMP kinase family. IspE subfamily.

It carries out the reaction 4-CDP-2-C-methyl-D-erythritol + ATP = 4-CDP-2-C-methyl-D-erythritol 2-phosphate + ADP + H(+). The protein operates within isoprenoid biosynthesis; isopentenyl diphosphate biosynthesis via DXP pathway; isopentenyl diphosphate from 1-deoxy-D-xylulose 5-phosphate: step 3/6. Functionally, catalyzes the phosphorylation of the position 2 hydroxy group of 4-diphosphocytidyl-2C-methyl-D-erythritol. In Paraburkholderia phytofirmans (strain DSM 17436 / LMG 22146 / PsJN) (Burkholderia phytofirmans), this protein is 4-diphosphocytidyl-2-C-methyl-D-erythritol kinase.